We begin with the raw amino-acid sequence, 247 residues long: Small ribosomal subunit protein eS6 (247 aa).

A disordered region spans residues 194–247; that stretch reads ALKKKRVTKKREDHAEYTKLLAQRMKEAKERKMERKRSNSRSKGDSIRESTSKK. Basic and acidic residues predominate over residues 217–247; that stretch reads RMKEAKERKMERKRSNSRSKGDSIRESTSKK.

Belongs to the eukaryotic ribosomal protein eS6 family. In terms of processing, ribosomal protein S6 is the major substrate of protein kinases in eukaryote ribosomes.

In terms of biological role, component of the 40S small ribosomal subunit. Plays an important role in controlling cell growth and proliferation through the selective translation of particular classes of mRNA. In Aplysia californica (California sea hare), this protein is Small ribosomal subunit protein eS6 (RPS6).